A 31-amino-acid chain; its full sequence is Photosystem II reaction center protein T (31 aa).

A helical membrane pass occupies residues 3–23; the sequence is ALVYVFLLVGTLMVIFFAIFF.

The protein belongs to the PsbT family. PSII is composed of 1 copy each of membrane proteins PsbA, PsbB, PsbC, PsbD, PsbE, PsbF, PsbH, PsbI, PsbJ, PsbK, PsbL, PsbM, PsbT, PsbX, PsbY, PsbZ, Psb30/Ycf12, at least 3 peripheral proteins of the oxygen-evolving complex and a large number of cofactors. It forms dimeric complexes.

It is found in the plastid. Its subcellular location is the chloroplast thylakoid membrane. Functionally, found at the monomer-monomer interface of the photosystem II (PS II) dimer, plays a role in assembly and dimerization of PSII. PSII is a light-driven water plastoquinone oxidoreductase, using light energy to abstract electrons from H(2)O, generating a proton gradient subsequently used for ATP formation. This is Photosystem II reaction center protein T from Gracilaria tenuistipitata var. liui (Red alga).